The primary structure comprises 434 residues: Septin-6 (434 aa).

A2 is modified (N-acetylalanine). S27 is subject to Phosphoserine. Positions 39 to 305 (QGFCFNILCV…ELYRRCKLEE (267 aa)) constitute a Septin-type G domain. Residues 49 to 56 (GETGLGKS) form a G1 motif region. Residues 49-56 (GETGLGKS), G104, 185-193 (KSDAISKSE), G239, and R254 each bind GTP. Positions 101-104 (STVG) are G3 motif. Positions 184 to 187 (AKSD) are G4 motif. Positions 321–407 (QETYEAKRNE…QRKAAAELLQ (87 aa)) form a coiled coil. At K367 the chain carries N6-acetyllysine. A disordered region spans residues 403–434 (AELLQSQGSQAGGSQTLKRDKEKKNNPWLCIE). Low complexity predominate over residues 407–417 (QSQGSQAGGSQ). At S416 the chain carries Phosphoserine. T418 carries the post-translational modification Phosphothreonine.

Belongs to the TRAFAC class TrmE-Era-EngA-EngB-Septin-like GTPase superfamily. Septin GTPase family. In terms of assembly, septins polymerize into heterooligomeric protein complexes that form filaments, and associate with cellular membranes, actin filaments and microtubules. GTPase activity is required for filament formation. Filaments are assembled from asymmetrical heterotrimers, composed of SEPTIN2, SEPTIN6 and SEPTIN7 that associate head-to-head to form a hexameric unit. Within the trimer, directly interacts with SEPTIN2 and SEPTIN7. Also interacts with SEPTIN9 and SEPTIN12. Interaction with SEPTIN12 alters filament structure. Component of a septin core octameric complex consisting of SEPTIN12, SEPTIN7, SEPTIN6 and SEPTIN2 or SEPTIN4 in the order 12-7-6-2-2-6-7-12 or 12-7-6-4-4-6-7-12 and located in the sperm annulus. Interacts with SOCS7. Interacts with HNRNPA1. In terms of tissue distribution, expressed in the cerebral cortex (at protein level). Associated with synaptic vesicles in various brain regions, including glomeruli of the olfactory bulb (at protein level).

Its subcellular location is the cytoplasm. It is found in the cytoskeleton. It localises to the spindle. The protein resides in the chromosome. The protein localises to the centromere. Its subcellular location is the kinetochore. It is found in the cleavage furrow. It localises to the midbody. The protein resides in the cell projection. The protein localises to the cilium. Its subcellular location is the flagellum. Filament-forming cytoskeletal GTPase. Required for normal organization of the actin cytoskeleton. Involved in cytokinesis. Forms a filamentous structure with SEPTIN12, SEPTIN6, SEPTIN2 and probably SEPTIN4 at the sperm annulus which is required for the structural integrity and motility of the sperm tail during postmeiotic differentiation. In Mus musculus (Mouse), this protein is Septin-6.